The chain runs to 102 residues: Large ribosomal subunit protein bL21 (102 aa).

The protein belongs to the bacterial ribosomal protein bL21 family. As to quaternary structure, part of the 50S ribosomal subunit. Contacts protein L20.

This protein binds to 23S rRNA in the presence of protein L20. This Campylobacter lari (strain RM2100 / D67 / ATCC BAA-1060) protein is Large ribosomal subunit protein bL21.